We begin with the raw amino-acid sequence, 501 residues long: 7-alpha-hydroxycholest-4-en-3-one 12-alpha-hydroxylase (501 aa).

A helical membrane pass occupies residues 1 to 21 (MVLWGPVLGALLVVIAGYLCL). A Phosphoserine modification is found at S326. C440 serves as a coordination point for heme.

It belongs to the cytochrome P450 family. Heme is required as a cofactor. Liver.

The protein resides in the endoplasmic reticulum membrane. It localises to the microsome membrane. It carries out the reaction 7alpha-hydroxycholest-4-en-3-one + reduced [NADPH--hemoprotein reductase] + O2 = 7alpha,12alpha-dihydroxycholest-4-en-3-one + oxidized [NADPH--hemoprotein reductase] + H2O + H(+). The catalysed reaction is 5beta-cholestane-3alpha,7alpha-diol + reduced [NADPH--hemoprotein reductase] + O2 = 5beta-cholestane-3alpha,7alpha,12alpha-triol + oxidized [NADPH--hemoprotein reductase] + H2O + H(+). The enzyme catalyses chenodeoxycholate + reduced [NADPH--hemoprotein reductase] + O2 = cholate + oxidized [NADPH--hemoprotein reductase] + H2O + H(+). Its pathway is lipid metabolism; bile acid biosynthesis. Its function is as follows. A cytochrome P450 monooxygenase involved in primary bile acid biosynthesis. Catalyzes the 12alpha-hydroxylation of 7alpha-hydroxy-4-cholesten-3-one, an intermediate metabolite in cholic acid biosynthesis. Controls biliary balance of cholic acid and chenodeoxycholic acid, ultimately regulating the intestinal absorption of dietary lipids. Mechanistically, uses molecular oxygen inserting one oxygen atom into a substrate, and reducing the second into a water molecule, with two electrons provided by NADPH via cytochrome P450 reductase (CPR; NADPH--hemoprotein reductase). This is 7-alpha-hydroxycholest-4-en-3-one 12-alpha-hydroxylase from Homo sapiens (Human).